A 173-amino-acid chain; its full sequence is Peptide methionine sulfoxide reductase MsrA (173 aa).

The active site involves C10.

It belongs to the MsrA Met sulfoxide reductase family.

The catalysed reaction is L-methionyl-[protein] + [thioredoxin]-disulfide + H2O = L-methionyl-(S)-S-oxide-[protein] + [thioredoxin]-dithiol. The enzyme catalyses [thioredoxin]-disulfide + L-methionine + H2O = L-methionine (S)-S-oxide + [thioredoxin]-dithiol. In terms of biological role, has an important function as a repair enzyme for proteins that have been inactivated by oxidation. Catalyzes the reversible oxidation-reduction of methionine sulfoxide in proteins to methionine. In Psychrobacter cryohalolentis (strain ATCC BAA-1226 / DSM 17306 / VKM B-2378 / K5), this protein is Peptide methionine sulfoxide reductase MsrA.